Reading from the N-terminus, the 243-residue chain is UPF0246 protein SAG2081 (243 aa).

It belongs to the UPF0246 family.

The polypeptide is UPF0246 protein SAG2081 (Streptococcus agalactiae serotype V (strain ATCC BAA-611 / 2603 V/R)).